A 391-amino-acid polypeptide reads, in one-letter code: Phosphoglycerate kinase (391 aa).

Substrate is bound by residues 21 to 23 (DLN), Arg36, 59 to 62 (HLGR), Arg113, and Arg146. ATP-binding positions include Lys197, Glu319, and 345 to 348 (GGDT).

It belongs to the phosphoglycerate kinase family. As to quaternary structure, monomer.

The protein localises to the cytoplasm. The enzyme catalyses (2R)-3-phosphoglycerate + ATP = (2R)-3-phospho-glyceroyl phosphate + ADP. It participates in carbohydrate degradation; glycolysis; pyruvate from D-glyceraldehyde 3-phosphate: step 2/5. This Shewanella halifaxensis (strain HAW-EB4) protein is Phosphoglycerate kinase.